Consider the following 135-residue polypeptide: Evasin P1134 (135 aa).

The N-terminal stretch at methionine 1–alanine 31 is a signal peptide. 3 disulfides stabilise this stretch: cysteine 41-cysteine 63, cysteine 45-cysteine 65, and cysteine 56-cysteine 76. N-linked (GlcNAc...) asparagine glycosylation occurs at asparagine 44. The disordered stretch occupies residues glutamate 88–proline 112.

The protein resides in the secreted. Functionally, salivary chemokine-binding protein which binds to host chemokine CXCL1. The polypeptide is Evasin P1134 (Ixodes ricinus (Common tick)).